The primary structure comprises 100 residues: Phosphoribosylformylglycinamidine synthase subunit PurS (100 aa).

Belongs to the PurS family. As to quaternary structure, homodimer. Part of the FGAM synthase complex composed of 1 PurL, 1 PurQ and 2 PurS subunits.

The protein localises to the cytoplasm. It catalyses the reaction N(2)-formyl-N(1)-(5-phospho-beta-D-ribosyl)glycinamide + L-glutamine + ATP + H2O = 2-formamido-N(1)-(5-O-phospho-beta-D-ribosyl)acetamidine + L-glutamate + ADP + phosphate + H(+). Its pathway is purine metabolism; IMP biosynthesis via de novo pathway; 5-amino-1-(5-phospho-D-ribosyl)imidazole from N(2)-formyl-N(1)-(5-phospho-D-ribosyl)glycinamide: step 1/2. Part of the phosphoribosylformylglycinamidine synthase complex involved in the purines biosynthetic pathway. Catalyzes the ATP-dependent conversion of formylglycinamide ribonucleotide (FGAR) and glutamine to yield formylglycinamidine ribonucleotide (FGAM) and glutamate. The FGAM synthase complex is composed of three subunits. PurQ produces an ammonia molecule by converting glutamine to glutamate. PurL transfers the ammonia molecule to FGAR to form FGAM in an ATP-dependent manner. PurS interacts with PurQ and PurL and is thought to assist in the transfer of the ammonia molecule from PurQ to PurL. The polypeptide is Phosphoribosylformylglycinamidine synthase subunit PurS (Synechocystis sp. (strain ATCC 27184 / PCC 6803 / Kazusa)).